The following is a 234-amino-acid chain: Enolase-phosphatase E1 (234 aa).

Mg(2+)-binding residues include D10 and E12. Substrate contacts are provided by residues S125 to S126 and K162. Mg(2+) is bound at residue D188.

It belongs to the HAD-like hydrolase superfamily. MasA/MtnC family. Monomer. The cofactor is Mg(2+).

The protein localises to the cytoplasm. It localises to the nucleus. It catalyses the reaction 5-methylsulfanyl-2,3-dioxopentyl phosphate + H2O = 1,2-dihydroxy-5-(methylsulfanyl)pent-1-en-3-one + phosphate. It functions in the pathway amino-acid biosynthesis; L-methionine biosynthesis via salvage pathway; L-methionine from S-methyl-5-thio-alpha-D-ribose 1-phosphate: step 3/6. The protein operates within amino-acid biosynthesis; L-methionine biosynthesis via salvage pathway; L-methionine from S-methyl-5-thio-alpha-D-ribose 1-phosphate: step 4/6. In terms of biological role, bifunctional enzyme that catalyzes the enolization of 2,3-diketo-5-methylthiopentyl-1-phosphate (DK-MTP-1-P) into the intermediate 2-hydroxy-3-keto-5-methylthiopentenyl-1-phosphate (HK-MTPenyl-1-P), which is then dephosphorylated to form the acireductone 1,2-dihydroxy-3-keto-5-methylthiopentene (DHK-MTPene). The chain is Enolase-phosphatase E1 from Sordaria macrospora (strain ATCC MYA-333 / DSM 997 / K(L3346) / K-hell).